Here is a 513-residue protein sequence, read N- to C-terminus: L-threonine dehydratase biosynthetic IlvA (513 aa).

Position 63 is an N6-(pyridoxal phosphate)lysine (Lys-63). Residues Asn-90, 189–193 (GGGGL), and Ser-316 each bind pyridoxal 5'-phosphate. ACT-like domains are found at residues 340–411 (ALLA…DMSD) and 433–504 (RLYT…DVTK).

It belongs to the serine/threonine dehydratase family. As to quaternary structure, homotetramer. The cofactor is pyridoxal 5'-phosphate.

The enzyme catalyses L-threonine = 2-oxobutanoate + NH4(+). Its pathway is amino-acid biosynthesis; L-isoleucine biosynthesis; 2-oxobutanoate from L-threonine: step 1/1. Catalyzes the anaerobic formation of alpha-ketobutyrate and ammonia from threonine in a two-step reaction. The first step involved a dehydration of threonine and a production of enamine intermediates (aminocrotonate), which tautomerizes to its imine form (iminobutyrate). Both intermediates are unstable and short-lived. The second step is the nonenzymatic hydrolysis of the enamine/imine intermediates to form 2-ketobutyrate and free ammonia. In the low water environment of the cell, the second step is accelerated by RidA. This Haemophilus influenzae (strain ATCC 51907 / DSM 11121 / KW20 / Rd) protein is L-threonine dehydratase biosynthetic IlvA (ilvA).